We begin with the raw amino-acid sequence, 179 residues long: GTP-dependent dephospho-CoA kinase (179 aa).

Residues Asp55, Val57, Asp74, Lys76, and Glu128 each contribute to the GTP site.

Belongs to the GTP-dependent DPCK family.

The catalysed reaction is 3'-dephospho-CoA + GTP = GDP + CoA + H(+). The protein operates within cofactor biosynthesis; coenzyme A biosynthesis. Its function is as follows. Catalyzes the GTP-dependent phosphorylation of the 3'-hydroxyl group of dephosphocoenzyme A to form coenzyme A (CoA). The sequence is that of GTP-dependent dephospho-CoA kinase from Saccharolobus islandicus (strain M.16.27) (Sulfolobus islandicus).